Reading from the N-terminus, the 476-residue chain is Aspartyl/glutamyl-tRNA(Asn/Gln) amidotransferase subunit B (476 aa).

This sequence belongs to the GatB/GatE family. GatB subfamily. Heterotrimer of A, B and C subunits.

It catalyses the reaction L-glutamyl-tRNA(Gln) + L-glutamine + ATP + H2O = L-glutaminyl-tRNA(Gln) + L-glutamate + ADP + phosphate + H(+). It carries out the reaction L-aspartyl-tRNA(Asn) + L-glutamine + ATP + H2O = L-asparaginyl-tRNA(Asn) + L-glutamate + ADP + phosphate + 2 H(+). Allows the formation of correctly charged Asn-tRNA(Asn) or Gln-tRNA(Gln) through the transamidation of misacylated Asp-tRNA(Asn) or Glu-tRNA(Gln) in organisms which lack either or both of asparaginyl-tRNA or glutaminyl-tRNA synthetases. The reaction takes place in the presence of glutamine and ATP through an activated phospho-Asp-tRNA(Asn) or phospho-Glu-tRNA(Gln). The chain is Aspartyl/glutamyl-tRNA(Asn/Gln) amidotransferase subunit B from Listeria monocytogenes serovar 1/2a (strain ATCC BAA-679 / EGD-e).